The primary structure comprises 66 residues: Cold shock protein CspB (66 aa).

In terms of domain architecture, CSD spans 4–63 (GKVKWFNNEKGYGFIEVEGGSDVFVHFTAIQGEGFKTLEEGQEVSFEIVQGNRGPQAANV).

As to quaternary structure, homodimer.

The protein resides in the cytoplasm. Its function is as follows. Affects cell viability at low temperatures. The sequence is that of Cold shock protein CspB (cspB) from Bacillus caldolyticus.